The sequence spans 140 residues: uncharacterized protein (140 aa).

Belongs to the MG067/MG068/MG395 family.

This is an uncharacterized protein from Mycoplasma pneumoniae (strain ATCC 29342 / M129 / Subtype 1) (Mycoplasmoides pneumoniae).